The primary structure comprises 22 residues: Chitin-binding protein 3 (22 aa).

Glycosylated; contains 2.5% carbohydrates.

In terms of biological role, chitin-binding protein. Has antifungal activity against F.solani, F.oxysporum, C.musae and C.gloesporoides but not against P.oligandrum. Depending on concentration the antifungal activity can be fungistatic or fungicidal. Inhibits both spore germination and mycelial growth in F.solani at a concentration of 0.1 mg/ml. Has antifungal activity against C.krusei, C.albicans, C.tropicalis and C.parapsilosis. Has no chitinase, beta-glucanase or hemagglutinating activity. Acts as a flocculent. In Moringa oleifera (Horseradish tree), this protein is Chitin-binding protein 3.